The chain runs to 391 residues: Ferrochelatase (391 aa).

Residues His-196 and Glu-281 each contribute to the Fe cation site.

It belongs to the ferrochelatase family.

The protein localises to the cytoplasm. The enzyme catalyses heme b + 2 H(+) = protoporphyrin IX + Fe(2+). Its pathway is porphyrin-containing compound metabolism; protoheme biosynthesis; protoheme from protoporphyrin-IX: step 1/1. Functionally, catalyzes the ferrous insertion into protoporphyrin IX. This chain is Ferrochelatase, found in Prochlorococcus marinus (strain SARG / CCMP1375 / SS120).